Consider the following 194-residue polypeptide: uncharacterized protein (194 aa).

An SIS domain is found at 34–192 (VMQCLLGGNK…CELVDQTLFP (159 aa)).

This sequence belongs to the SIS family. DiaA subfamily.

This is an uncharacterized protein from Haemophilus influenzae (strain ATCC 51907 / DSM 11121 / KW20 / Rd).